A 644-amino-acid chain; its full sequence is Exoribonuclease 2 (644 aa).

An RNB domain is found at 189–516 (REDLTALDFV…NHRLLKAVIK (328 aa)). Positions 561–643 (DTRFAAEIVD…ETRSIIARPV (83 aa)) constitute an S1 motif domain.

Belongs to the RNR ribonuclease family. RNase II subfamily.

The protein localises to the cytoplasm. The catalysed reaction is Exonucleolytic cleavage in the 3'- to 5'-direction to yield nucleoside 5'-phosphates.. In terms of biological role, involved in mRNA degradation. Hydrolyzes single-stranded polyribonucleotides processively in the 3' to 5' direction. This chain is Exoribonuclease 2, found in Escherichia coli (strain UTI89 / UPEC).